The chain runs to 125 residues: Lymphocyte antigen 6 complex locus protein G6c (125 aa).

The first 18 residues, 1 to 18 (MKALMLLTLSVLLCWVSA), serve as a signal peptide directing secretion. In terms of domain architecture, UPAR/Ly6 spans 20–111 (IRCHSCYKVP…PRPTPALGLV (92 aa)). 3 cysteine pairs are disulfide-bonded: Cys-22-Cys-47, Cys-25-Cys-33, and Cys-39-Cys-65. Residue Asn-88 is glycosylated (N-linked (GlcNAc...) asparagine). An intrachain disulfide couples Cys-92 to Cys-97. Ser-99 carries the GPI-anchor amidated serine lipid modification. The propeptide at 100–125 (AGPRPTPALGLVFLTSLAGLGLWLLH) is removed in mature form.

In terms of assembly, monomer. N-glycosylated. Highly expressed at the leading edges of cells, on filopodia.

It is found in the cell membrane. The protein is Lymphocyte antigen 6 complex locus protein G6c (LY6G6C) of Homo sapiens (Human).